A 235-amino-acid chain; its full sequence is Dual specificity protein phosphatase 15 (235 aa).

Glycine 2 carries N-myristoyl glycine lipidation. The 141-residue stretch at 4–144 (GMTKVLPGLY…LEEFGWANSQ (141 aa)) folds into the Tyrosine-protein phosphatase domain. The active-site Phosphocysteine intermediate is the cysteine 88. Residues 183 to 193 (AASATTASSAA) show a composition bias toward low complexity. Residues 183 to 212 (AASATTASSAAEGTLQRLVPRSPRDSHQPL) are disordered.

This sequence belongs to the protein-tyrosine phosphatase family. Non-receptor class dual specificity subfamily. In terms of tissue distribution, isoform 1 is expressed in testis; predominantly in developing spermatocytes (at protein level). Isoform 2 is highly expressed in testis. Expressed in spinal cord and specifically in oligodendroglial cells. Expressed in embryonic brain cortex; down-regulated in mice with experimental autoimmune encephalomyelitis (EAE).

The protein localises to the cell membrane. It carries out the reaction O-phospho-L-tyrosyl-[protein] + H2O = L-tyrosyl-[protein] + phosphate. The catalysed reaction is O-phospho-L-seryl-[protein] + H2O = L-seryl-[protein] + phosphate. It catalyses the reaction O-phospho-L-threonyl-[protein] + H2O = L-threonyl-[protein] + phosphate. Functionally, may dephosphorylate MAPK13, ATF2, ERBB3, PDGFRB and SNX6. In terms of biological role, may play a role in the regulation of oligodendrocyte differentiation. May play a role in the regulation of myelin formation. Involved in the regulation of Erk1/2 phosphorylation in Schwann cells; the signaling may be linked to the regulation of myelination. This is Dual specificity protein phosphatase 15 from Mus musculus (Mouse).